A 349-amino-acid chain; its full sequence is E3 ubiquitin-protein ligase rnf146 (349 aa).

A disordered region spans residues 1 to 21 (MASCGEVDHSVSSLPSSKKGS). Residues 10 to 21 (SVSSLPSSKKGS) are compositionally biased toward low complexity. The RING-type zinc finger occupies 41–79 (CAICLQSCVHPVQLPCRHVFCFLCVKGASWQSKRCALCR). Residues 97 to 173 (ELKTGGRGAT…EHGRRRKIKR (77 aa)) enclose the WWE domain. Residues Y113, R116, W120, Y150, Q159, R169, and K181 each contribute to the a glycoprotein site. Disordered regions lie at residues 226 to 251 (TTVL…SPSL) and 264 to 349 (DAPE…CTEV). Positions 283-292 (SMSSSPNTYA) are enriched in polar residues. Over residues 298-307 (WSDDEGDGEA) the composition is skewed to acidic residues. Basic and acidic residues predominate over residues 308 to 317 (VEPREQRLRL).

Its subcellular location is the cytoplasm. The protein localises to the cytosol. It is found in the nucleus. It catalyses the reaction S-ubiquitinyl-[E2 ubiquitin-conjugating enzyme]-L-cysteine + [acceptor protein]-L-lysine = [E2 ubiquitin-conjugating enzyme]-L-cysteine + N(6)-ubiquitinyl-[acceptor protein]-L-lysine.. It participates in protein modification; protein ubiquitination. E3 ubiquitin-protein ligase that specifically binds poly-ADP-ribosylated proteins and mediates their ubiquitination and subsequent degradation. May regulate many important biological processes, such as cell survival and DNA damage response. Acts as an activator of the Wnt signaling pathway by mediating the ubiquitination of poly-ADP-ribosylated proteins. Neuroprotective protein. Protects against cell death induced by DNA damaging agents and rescues cells from G1 arrest. Promotes cell survival after gamma-irradiation. Facilitates DNA repair. This is E3 ubiquitin-protein ligase rnf146 (rnf146) from Salmo salar (Atlantic salmon).